Consider the following 217-residue polypeptide: tRNA (guanine-N(7)-)-methyltransferase (217 aa).

S-adenosyl-L-methionine-binding residues include E44, E69, D96, and D118. D118 is an active-site residue. K122 is a substrate binding site. The segment at 124-129 is interaction with RNA; sequence RHEKRR. Substrate-binding positions include D154 and 191-194; that span reads TEYE.

The protein belongs to the class I-like SAM-binding methyltransferase superfamily. TrmB family.

It catalyses the reaction guanosine(46) in tRNA + S-adenosyl-L-methionine = N(7)-methylguanosine(46) in tRNA + S-adenosyl-L-homocysteine. The protein operates within tRNA modification; N(7)-methylguanine-tRNA biosynthesis. Its function is as follows. Catalyzes the formation of N(7)-methylguanine at position 46 (m7G46) in tRNA. The polypeptide is tRNA (guanine-N(7)-)-methyltransferase (Bacillus velezensis (strain DSM 23117 / BGSC 10A6 / LMG 26770 / FZB42) (Bacillus amyloliquefaciens subsp. plantarum)).